The sequence spans 742 residues: Dynein axonemal intermediate chain 4 (742 aa).

4 WD repeats span residues 462–502 (HCEC…DFPV), 511–559 (KHTS…DCND), 631–671 (GHKG…PILT), and 674–713 (NTTNAVYDIMWSPSSALMFGAVSENRVEIWDLGVSIIDPV).

In terms of assembly, part of the multisubunit axonemal dynein complex formed at least of two heavy chains and a number of intermediate and light chains. Associated with axonemal dynein subunits such as, DNAH2, DNAI3, and DYNLT1.

It is found in the cytoplasm. Its subcellular location is the cytoskeleton. The protein localises to the flagellum axoneme. It localises to the cilium axoneme. The protein resides in the dynein axonemal particle. Functionally, plays a critical role in the assembly of axonemal dynein complex, thereby playing a role in ciliary motility. The polypeptide is Dynein axonemal intermediate chain 4 (Xenopus laevis (African clawed frog)).